The sequence spans 309 residues: Malate dehydrogenase (309 aa).

NAD(+) is bound by residues 6–11 (GSGRVG) and Asp31. Positions 80 and 86 each coordinate substrate. Residues Asn93 and 116 to 118 (TTN) contribute to the NAD(+) site. Substrate-binding residues include Asn118 and Arg149. The active-site Proton acceptor is the His173.

This sequence belongs to the LDH/MDH superfamily.

It catalyses the reaction (S)-malate + NAD(+) = oxaloacetate + NADH + H(+). Catalyzes the reversible oxidation of malate to oxaloacetate. The protein is Malate dehydrogenase (mdh) of Caldivirga maquilingensis (strain ATCC 700844 / DSM 13496 / JCM 10307 / IC-167).